The primary structure comprises 134 residues: Large ribosomal subunit protein uL16c (134 aa).

The protein belongs to the universal ribosomal protein uL16 family. As to quaternary structure, part of the 50S ribosomal subunit.

It is found in the plastid. Its subcellular location is the chloroplast. The protein is Large ribosomal subunit protein uL16c of Pinus koraiensis (Korean pine).